A 285-amino-acid chain; its full sequence is 3-methyl-2-oxobutanoate hydroxymethyltransferase 1 (285 aa).

2 residues coordinate Mg(2+): D49 and D88. 3-methyl-2-oxobutanoate is bound by residues 49–50 (DS), D88, and K118. E120 provides a ligand contact to Mg(2+). E187 functions as the Proton acceptor in the catalytic mechanism.

The protein belongs to the PanB family. As to quaternary structure, homodecamer; pentamer of dimers. The cofactor is Mg(2+).

It localises to the cytoplasm. The enzyme catalyses 3-methyl-2-oxobutanoate + (6R)-5,10-methylene-5,6,7,8-tetrahydrofolate + H2O = 2-dehydropantoate + (6S)-5,6,7,8-tetrahydrofolate. It participates in cofactor biosynthesis; (R)-pantothenate biosynthesis; (R)-pantoate from 3-methyl-2-oxobutanoate: step 1/2. Catalyzes the reversible reaction in which hydroxymethyl group from 5,10-methylenetetrahydrofolate is transferred onto alpha-ketoisovalerate to form ketopantoate. The chain is 3-methyl-2-oxobutanoate hydroxymethyltransferase 1 from Burkholderia lata (strain ATCC 17760 / DSM 23089 / LMG 22485 / NCIMB 9086 / R18194 / 383).